The chain runs to 1390 residues: Hepatocyte growth factor receptor (1390 aa).

Residues 1–24 (MKAPAVLAPGILVLLFTLVQRSNG) form the signal peptide. The Extracellular segment spans residues 25–932 (ECKEALAKSE…VIVQPDQNFT (908 aa)). Residues 27–515 (KEALAKSEMN…TGKKITKIPL (489 aa)) enclose the Sema domain. N-linked (GlcNAc...) asparagine glycosylation occurs at asparagine 45. Disulfide bonds link cysteine 95/cysteine 101, cysteine 98/cysteine 160, cysteine 133/cysteine 141, and cysteine 172/cysteine 175. An N-linked (GlcNAc...) asparagine glycan is attached at asparagine 106. N-linked (GlcNAc...) asparagine glycosylation occurs at asparagine 149. Asparagine 202 carries an N-linked (GlcNAc...) asparagine glycan. 2 disulfides stabilise this stretch: cysteine 298/cysteine 363 and cysteine 385/cysteine 397. N-linked (GlcNAc...) asparagine glycans are attached at residues asparagine 399 and asparagine 405. Disulfide bonds link cysteine 520–cysteine 538, cysteine 526–cysteine 561, cysteine 529–cysteine 545, and cysteine 541–cysteine 551. IPT/TIG domains follow at residues 563 to 655 (PAIY…FSYV), 657 to 739 (PVIT…FSYR), and 742 to 836 (PIVY…LIYV). The O-linked (Man) threonine glycan is linked to threonine 582. Asparagine 607 carries N-linked (GlcNAc...) asparagine glycosylation. Cysteines 610 and 624 form a disulfide. Asparagine 635 is a glycosylation site (N-linked (GlcNAc...) asparagine). A glycan (O-linked (Man) threonine) is linked at threonine 676. Cysteine 697 and cysteine 709 form a disulfide bridge. Residue threonine 761 is glycosylated (O-linked (Man) threonine). 3 N-linked (GlcNAc...) asparagine glycosylation sites follow: asparagine 785, asparagine 879, and asparagine 930. A helical membrane pass occupies residues 933-955 (GLIAGVVSISTALLLLLGFFLWL). Residues 956–1390 (KKRKQIKDLG…TRPASFWETS (435 aa)) lie on the Cytoplasmic side of the membrane. Serine 966 is subject to Phosphoserine. At threonine 977 the chain carries Phosphothreonine. 3 positions are modified to phosphoserine: serine 990, serine 997, and serine 1000. Position 1003 is a phosphotyrosine (tyrosine 1003). One can recognise a Protein kinase domain in the interval 1078–1345 (VHFNEVIGRG…RISAIFSTFI (268 aa)). ATP contacts are provided by residues 1084-1092 (IGRGHFGCV) and lysine 1110. The active-site Proton acceptor is aspartate 1204. The tract at residues 1212 to 1390 (LDEKFTVKVA…TRPASFWETS (179 aa)) is interaction with RANBP9. Tyrosine 1230 is subject to Phosphotyrosine. Phosphotyrosine; by autocatalysis is present on residues tyrosine 1234 and tyrosine 1235. At threonine 1289 the chain carries Phosphothreonine. Positions 1320 to 1359 (WHPKAEMRPSFSELVSRISAIFSTFIGEHYVHVNATYVNV) are interaction with MUC20. Residues tyrosine 1349 and tyrosine 1356 each carry the phosphotyrosine; by autocatalysis modification. Phosphotyrosine is present on tyrosine 1365.

Belongs to the protein kinase superfamily. Tyr protein kinase family. Heterodimer made of an alpha chain (50 kDa) and a beta chain (145 kDa) which are disulfide linked. Binds PLXNB1. Interacts when phosphorylated with downstream effectors including STAT3, PIK3R1, SRC, PCLG1, GRB2 and GAB1. Interacts with SPSB1, SPSB2 and SPSB4. Interacts with INPP5D/SHIP1. When phosphorylated at Tyr-1356, interacts with INPPL1/SHIP2. Interacts with RANBP9 and RANBP10, as well as SPSB1, SPSB2, SPSB3 and SPSB4. SPSB1 binding occurs in the presence and in the absence of HGF, however HGF treatment has a positive effect on this interaction. Interacts with MUC20; prevents interaction with GRB2 and suppresses hepatocyte growth factor-induced cell proliferation. Interacts with GRB10. Interacts with PTPN1 and PTPN2. Interacts with LECT2; this interaction may have an antagonistic effect on receptor activation. Interacts with HSP90AA1 and HSP90AB1; the interaction suppresses MET kinase activity. Interacts with tensin TNS3. Interacts (when phosphorylated) with tensin TNS4 (via SH2 domain); the interaction increases MET protein stability by inhibiting MET endocytosis and subsequent lysosomal degradation. In terms of assembly, (Microbial infection) Interacts via extracytoplasmic residues 25-656 with L.monocytogenes InlB; MET can bind HGF, its endogenous ligand, and InlB simultaneously. InlB probably dimerizes upon binding to MET, which encourages subsequent dimerization of MET. In terms of processing, autophosphorylated in response to ligand binding on Tyr-1234 and Tyr-1235 in the kinase domain leading to further phosphorylation of Tyr-1349 and Tyr-1356 in the C-terminal multifunctional docking site. Dephosphorylated by PTPRJ at Tyr-1349 and Tyr-1365. Dephosphorylated by PTPN1 and PTPN2. Post-translationally, ubiquitinated. Ubiquitination by CBL regulates MET endocytosis, resulting in decreasing plasma membrane receptor abundance, and in endosomal degradation and/or recycling of internalized receptors. O-mannosylation of IPT/TIG domains by TMEM260 is required for protein maturation. O-mannosylated residues are composed of single mannose glycans that are not elongated or modified. In terms of processing, (Microbial infection) Tyrosine phosphorylation is stimulated by L.monocytogenes InlB. Tyrosine phosphorylation is maximal 10-20 minutes after treatment with InlB and disappears by 60 minutes. The phosphorylated residues were not identified. Expressed in normal hepatocytes as well as in epithelial cells lining the stomach, the small and the large intestine. Found also in basal keratinocytes of esophagus and skin. High levels are found in liver, gastrointestinal tract, thyroid and kidney. Also present in the brain. Expressed in metaphyseal bone (at protein level).

It is found in the membrane. The protein localises to the secreted. It carries out the reaction L-tyrosyl-[protein] + ATP = O-phospho-L-tyrosyl-[protein] + ADP + H(+). Its activity is regulated as follows. In its inactive state, the C-terminal tail interacts with the catalytic domain and inhibits the kinase activity. Upon ligand binding, the C-terminal tail is displaced and becomes phosphorylated, thus increasing the kinase activity. Its function is as follows. Receptor tyrosine kinase that transduces signals from the extracellular matrix into the cytoplasm by binding to hepatocyte growth factor/HGF ligand. Regulates many physiological processes including proliferation, scattering, morphogenesis and survival. Ligand binding at the cell surface induces autophosphorylation of MET on its intracellular domain that provides docking sites for downstream signaling molecules. Following activation by ligand, interacts with the PI3-kinase subunit PIK3R1, PLCG1, SRC, GRB2, STAT3 or the adapter GAB1. Recruitment of these downstream effectors by MET leads to the activation of several signaling cascades including the RAS-ERK, PI3 kinase-AKT, or PLCgamma-PKC. The RAS-ERK activation is associated with the morphogenetic effects while PI3K/AKT coordinates prosurvival effects. During embryonic development, MET signaling plays a role in gastrulation, development and migration of neuronal precursors, angiogenesis and kidney formation. During skeletal muscle development, it is crucial for the migration of muscle progenitor cells and for the proliferation of secondary myoblasts. In adults, participates in wound healing as well as organ regeneration and tissue remodeling. Also promotes differentiation and proliferation of hematopoietic cells. May regulate cortical bone osteogenesis. Functionally, (Microbial infection) Acts as a receptor for Listeria monocytogenes internalin InlB, mediating entry of the pathogen into cells. This is Hepatocyte growth factor receptor (MET) from Homo sapiens (Human).